A 794-amino-acid polypeptide reads, in one-letter code: FT-interacting protein 1 (794 aa).

A compositionally biased stretch (basic and acidic residues) spans 1–27; it reads MAAKDGAKSQEDYKLKDMKPELGERWP. The segment at 1–34 is disordered; sequence MAAKDGAKSQEDYKLKDMKPELGERWPHGGQRGG. 3 C2 domains span residues 37-158, 198-321, and 364-492; these read WIGS…PQWY, VQGE…SKWY, and YISD…THSY. Residues Asp76, Asp123, Glu125, and Glu131 each contribute to the Ca(2+) site. Helical transmembrane passes span 510 to 532, 595 to 615, 619 to 639, and 737 to 757; these read LAVR…PLLP, IVSV…VCYW, LTTI…ELIL, and LFVI…FKII.

This sequence belongs to the MCTP family. Interacts with FT in phloem companion cells. Requires Ca(2+) as cofactor. In terms of tissue distribution, expressed in the vascular tissues of roots, cotyledons and rosette leaves. Specifically located in the phloem including companion cells. Observed in flowers. Not detected in the shoot apical meristem.

It is found in the endoplasmic reticulum membrane. Its subcellular location is the cell junction. It localises to the plasmodesma. Functionally, involved in the export of FT from the phloem companion cells to the sieve elements through the plasmodesmata. Regulates flowering time under long days. May function as a signaling molecule by regulating the trafficking of other regulators. The protein is FT-interacting protein 1 of Arabidopsis thaliana (Mouse-ear cress).